The chain runs to 313 residues: Fructose-1,6-bisphosphatase class 1 (313 aa).

E90, D111, L113, and D114 together coordinate Mg(2+). Residues 114–117 (DGSS), Y222, and K253 contribute to the substrate site. E259 is a binding site for Mg(2+).

The protein belongs to the FBPase class 1 family. As to quaternary structure, homotetramer. Mg(2+) is required as a cofactor.

Its subcellular location is the cytoplasm. It catalyses the reaction beta-D-fructose 1,6-bisphosphate + H2O = beta-D-fructose 6-phosphate + phosphate. It participates in carbohydrate biosynthesis; gluconeogenesis. The chain is Fructose-1,6-bisphosphatase class 1 from Geotalea uraniireducens (strain Rf4) (Geobacter uraniireducens).